The following is a 205-amino-acid chain: Transcriptional regulator GfcR (205 aa).

Belongs to the purine/pyrimidine phosphoribosyltransferase family. GfcR subfamily.

In Methanococcus maripaludis (strain C5 / ATCC BAA-1333), this protein is Transcriptional regulator GfcR.